The primary structure comprises 143 residues: Cofilin (143 aa).

One can recognise an ADF-H domain in the interval 5–137; sequence GVAVSDEALK…AYESVLEKIS (133 aa).

Belongs to the actin-binding proteins ADF family.

The protein localises to the cytoplasm. It localises to the cytoskeleton. It is found in the nucleus matrix. Functionally, controls reversibly actin polymerization and depolymerization in a pH-sensitive manner. It has the ability to bind G- and F-actin in a 1:1 ratio of cofilin to actin. Binding to F-actin is regulated by tropomyosin. It is the major component of intranuclear and cytoplasmic actin rods. Required for accumulation of actin at the cell division site via depolymerizing actin at the cell ends. In association with myosin II has a role in the assembly of the contractile ring via severing actin filaments. Involved in the maintenance of the contractile ring once formed. In association with profilin and capping protein, has a role in the mitotic reorganization of the actin cytoskeleton. This is Cofilin (COF1) from Ogataea parapolymorpha (strain ATCC 26012 / BCRC 20466 / JCM 22074 / NRRL Y-7560 / DL-1) (Yeast).